The chain runs to 338 residues: HLA class I histocompatibility antigen, alpha chain G (338 aa).

Residues 1 to 24 (MVVMAPRTLFLLLSGALTLTETWA) form the signal peptide. Positions 3 to 11 (VMAPRTLFL) are VL9 epitope. An alpha-1 region spans residues 25-114 (GSHSMRYFSA…LRGYYNQSEA (90 aa)). The Extracellular portion of the chain corresponds to 25–308 (GSHSMRYFSA…KQSSLPTIPI (284 aa)). A peptide antigen is bound by residues tyrosine 31, histidine 94, asparagine 101, and tyrosine 108. A glycan (N-linked (GlcNAc...) asparagine) is linked at asparagine 110. Residues 115–206 (SSHTLQWMIG…ENGKEMLQRA (92 aa)) are alpha-2. A disulfide bridge links cysteine 125 with cysteine 188. A peptide antigen contacts are provided by serine 167, lysine 170, glutamine 179, arginine 180, tyrosine 183, and tyrosine 195. Residues 207 to 298 (DPPKTHVTHH…GLPEPLMLRW (92 aa)) form an alpha-3 region. The Ig-like C1-type domain maps to 209–299 (PKTHVTHHPV…LPEPLMLRWK (91 aa)). Residues cysteine 227 and cysteine 283 are joined by a disulfide bond. The tract at residues 299 to 308 (KQSSLPTIPI) is connecting peptide. A helical membrane pass occupies residues 309 to 332 (MGIVAGLVVLAAVVTGAAVAAVLW). The Cytoplasmic portion of the chain corresponds to 333–338 (RKKSSD). Residues 334 to 336 (KKS) carry the ER-retrieval signal motif.

This sequence belongs to the MHC class I family. In terms of assembly, forms a heterotrimer with B2M and a self-peptide (peptide-bound HLA-G-B2M). HLA-G-B2M complex interacts with components of the antigen processing machinery TAPBP and TAP1-TAP2 complex; this interaction is required for loading of high affinity peptides and heterotrimer translocation to the cell surface. Interacts with CALCR; this interaction is required for appropriate folding. Interacts with COPB1; this interaction mediates the endoplasmic reticulum (ER) retrieval of HLA-G-B2M complexes that bind low affinity peptides. On the cell surface, peptide-bound HLA-G-B2M molecules (referred to as monomers) can form disulfide-linked homomultimers, homodimers and homotrimers. Interacts with KIR2DL4; this interaction is direct. Interacts with LILRB1 and LILRB2 receptors; this interaction is direct. Interacts with CD160; this interactions is direct. Interacts with CD8A homodimer; this interaction is direct and might down-regulate T cell receptor signaling. Isoform 2: Forms a non-disulfide-linked homodimer and interacts with LILRB2. N-glycosylated. In terms of processing, produced by proteolytic cleavage at the cell surface (shedding) by matrix metalloproteinase MMP2. In terms of tissue distribution, expressed in adult eye. Expressed in immune cell subsets including monocytes, myeloid and plasmacytoid dendritic cells and regulatory T cells (Tr1)(at protein level). Secreted by follicular dendritic cell and follicular helper T cells. Detected in physiological fluids including amniotic fluid and serum. As to expression, expressed in placenta, amniotic membrane, skin, cord blood and peripheral blood mononuclear cells.

It localises to the cell membrane. It is found in the endoplasmic reticulum membrane. The protein resides in the early endosome membrane. The protein localises to the secreted. Its subcellular location is the early endosome. It localises to the cell projection. It is found in the filopodium membrane. Its function is as follows. Non-classical major histocompatibility class Ib molecule involved in immune regulatory processes at the maternal-fetal interface. In complex with B2M/beta-2 microglobulin binds a limited repertoire of nonamer self-peptides derived from intracellular proteins including histones and ribosomal proteins. Peptide-bound HLA-G-B2M complex acts as a ligand for inhibitory/activating KIR2DL4, LILRB1 and LILRB2 receptors on uterine immune cells to promote fetal development while maintaining maternal-fetal tolerance. Upon interaction with KIR2DL4 and LILRB1 receptors on decidual NK cells, it triggers NK cell senescence-associated secretory phenotype as a molecular switch to promote vascular remodeling and fetal growth in early pregnancy. Through interaction with KIR2DL4 receptor on decidual macrophages induces pro-inflammatory cytokine production mainly associated with tissue remodeling. Through interaction with LILRB2 receptor triggers differentiation of type 1 regulatory T cells and myeloid-derived suppressor cells, both of which actively maintain maternal-fetal tolerance. May play a role in balancing tolerance and antiviral-immunity at maternal-fetal interface by keeping in check the effector functions of NK, CD8+ T cells and B cells. Reprograms B cells toward an immune suppressive phenotype via LILRB1. May induce immune activation/suppression via intercellular membrane transfer (trogocytosis), likely enabling interaction with KIR2DL4, which resides mostly in endosomes. Through interaction with the inhibitory receptor CD160 on endothelial cells may control angiogenesis in immune privileged sites. In terms of biological role, likely does not bind B2M and presents peptides. Negatively regulates NK cell- and CD8+ T cell-mediated cytotoxicity. Functionally, non-classical major histocompatibility class Ib molecule involved in immune regulatory processes at the maternal-fetal interface. In complex with B2M/beta-2 microglobulin binds a limited repertoire of nonamer self-peptides derived from intracellular proteins including histones and ribosomal proteins. Peptide-bound HLA-G-B2M complex acts as a ligand for inhibitory/activating KIR2DL4, LILRB1 and LILRB2 receptors on uterine immune cells to promote fetal development while maintaining maternal-fetal tolerance. Upon interaction with KIR2DL4 and LILRB1 receptors on decidual NK cells, it triggers NK cell senescence-associated secretory phenotype as a molecular switch to promote vascular remodeling and fetal growth in early pregnancy. Through interaction with KIR2DL4 receptor on decidual macrophages induces pro-inflammatory cytokine production mainly associated with tissue remodeling. Through interaction with LILRB2 receptor triggers differentiation of type 1 regulatory T cells and myeloid-derived suppressor cells, both of which actively maintain maternal-fetal tolerance. Reprograms B cells toward an immune suppressive phenotype via LILRB1. Likely does not bind B2M and presents peptides. This Homo sapiens (Human) protein is HLA class I histocompatibility antigen, alpha chain G.